A 224-amino-acid chain; its full sequence is Ribosomal RNA small subunit methyltransferase G (224 aa).

S-adenosyl-L-methionine contacts are provided by residues Gly69, Leu74, 119-120, and Arg137; that span reads AE.

It belongs to the methyltransferase superfamily. RNA methyltransferase RsmG family.

The protein localises to the cytoplasm. In terms of biological role, specifically methylates the N7 position of guanine in position 518 of 16S rRNA. The sequence is that of Ribosomal RNA small subunit methyltransferase G from Mycobacterium bovis (strain ATCC BAA-935 / AF2122/97).